The sequence spans 420 residues: Gamma-glutamyl phosphate reductase 2 (420 aa).

This sequence belongs to the gamma-glutamyl phosphate reductase family.

The protein resides in the cytoplasm. It catalyses the reaction L-glutamate 5-semialdehyde + phosphate + NADP(+) = L-glutamyl 5-phosphate + NADPH + H(+). It functions in the pathway amino-acid biosynthesis; L-proline biosynthesis; L-glutamate 5-semialdehyde from L-glutamate: step 2/2. Its function is as follows. Catalyzes the NADPH-dependent reduction of L-glutamate 5-phosphate into L-glutamate 5-semialdehyde and phosphate. The product spontaneously undergoes cyclization to form 1-pyrroline-5-carboxylate. In Synechocystis sp. (strain ATCC 27184 / PCC 6803 / Kazusa), this protein is Gamma-glutamyl phosphate reductase 2.